We begin with the raw amino-acid sequence, 468 residues long: Glutamate--tRNA ligase (468 aa).

A 'HIGH' region motif is present at residues 8–18 (PSPTGDPHVGT). Positions 243 to 247 (KISKR) match the 'KMSKS' region motif. Position 246 (Lys246) interacts with ATP.

It belongs to the class-I aminoacyl-tRNA synthetase family. Glutamate--tRNA ligase type 1 subfamily. Monomer.

The protein resides in the cytoplasm. The enzyme catalyses tRNA(Glu) + L-glutamate + ATP = L-glutamyl-tRNA(Glu) + AMP + diphosphate. Catalyzes the attachment of glutamate to tRNA(Glu) in a two-step reaction: glutamate is first activated by ATP to form Glu-AMP and then transferred to the acceptor end of tRNA(Glu). The protein is Glutamate--tRNA ligase of Thermus thermophilus (strain ATCC BAA-163 / DSM 7039 / HB27).